Here is a 622-residue protein sequence, read N- to C-terminus: ABC transporter permease protein YxdM (622 aa).

10 consecutive transmembrane segments (helical) span residues 20–40, 56–76, 118–138, 154–174, 195–215, 219–239, 279–299, 498–518, 558–578, and 590–610; these read AFFL…MFLF, GLTA…LYSV, AGII…AYIL, ITAC…ILFV, PSVL…GMVL, VHGA…YFFF, LFFI…VLAM, TVQL…VFFV, IQLA…TLFA, and VAGP…LFFL.

Belongs to the ABC-4 integral membrane protein family. The complex is composed of two ATP-binding proteins (YxdL) and two transmembrane proteins (YxdM).

The protein localises to the cell membrane. In terms of biological role, part of the ABC transporter complex YxdLM which could be involved in peptide resistance. In Bacillus subtilis (strain 168), this protein is ABC transporter permease protein YxdM (yxdM).